A 237-amino-acid polypeptide reads, in one-letter code: Uridylate kinase (237 aa).

An ATP-binding site is contributed by 11 to 14; sequence KLSG. Residue Gly53 coordinates UMP. Positions 54 and 58 each coordinate ATP. UMP-binding positions include Asp73 and 134–141; that span reads TGNPFFTT. The ATP site is built by Thr161, Tyr167, and Asp170.

Belongs to the UMP kinase family. In terms of assembly, homohexamer.

Its subcellular location is the cytoplasm. The enzyme catalyses UMP + ATP = UDP + ADP. Its pathway is pyrimidine metabolism; CTP biosynthesis via de novo pathway; UDP from UMP (UMPK route): step 1/1. With respect to regulation, inhibited by UTP. Catalyzes the reversible phosphorylation of UMP to UDP. This Burkholderia vietnamiensis (strain G4 / LMG 22486) (Burkholderia cepacia (strain R1808)) protein is Uridylate kinase.